We begin with the raw amino-acid sequence, 138 residues long: Large ribosomal subunit protein uL16 (138 aa).

The protein belongs to the universal ribosomal protein uL16 family. In terms of assembly, part of the 50S ribosomal subunit.

Binds 23S rRNA and is also seen to make contacts with the A and possibly P site tRNAs. The protein is Large ribosomal subunit protein uL16 of Chlamydia pneumoniae (Chlamydophila pneumoniae).